Reading from the N-terminus, the 441-residue chain is Thymidine phosphorylase (441 aa).

This sequence belongs to the thymidine/pyrimidine-nucleoside phosphorylase family. Homodimer.

The catalysed reaction is thymidine + phosphate = 2-deoxy-alpha-D-ribose 1-phosphate + thymine. It functions in the pathway pyrimidine metabolism; dTMP biosynthesis via salvage pathway; dTMP from thymine: step 1/2. In terms of biological role, the enzymes which catalyze the reversible phosphorolysis of pyrimidine nucleosides are involved in the degradation of these compounds and in their utilization as carbon and energy sources, or in the rescue of pyrimidine bases for nucleotide synthesis. This chain is Thymidine phosphorylase, found in Chromobacterium violaceum (strain ATCC 12472 / DSM 30191 / JCM 1249 / CCUG 213 / NBRC 12614 / NCIMB 9131 / NCTC 9757 / MK).